Here is a 176-residue protein sequence, read N- to C-terminus: Disulfide bond formation protein B (176 aa).

The Cytoplasmic portion of the chain corresponds to 1–11; the sequence is MLQLTTYRNLQ. Residues 12 to 28 form a helical membrane-spanning segment; the sequence is VFLVIMTAIGMSFALFF. Residues 29 to 46 are Periplasmic-facing; it reads LQRYMGFSPCPLCIFQRI. An intrachain disulfide couples Cys-38 to Cys-41. Residues 47-63 form a helical membrane-spanning segment; it reads GLMIMGGFALIAALFHP. Residues 64 to 70 lie on the Cytoplasmic side of the membrane; that stretch reads KSMVIRL. Residues 71 to 88 form a helical membrane-spanning segment; it reads LLWLGSLAGIGWAAIVAG. Residues 89–145 lie on the Periplasmic side of the membrane; that stretch reads RHVWLQHLPADQVPSCGPGLDYWLDTLPMQQVLKEVFAGSGECASIDWTFLGLSIPE. A disulfide bridge links Cys-104 with Cys-131. Residues 146 to 164 form a helical membrane-spanning segment; sequence QSLILFSILILTHLLILWR. Residues 165-176 are Cytoplasmic-facing; that stretch reads IVRPATPKPLAR.

Belongs to the DsbB family.

Its subcellular location is the cell inner membrane. Functionally, required for disulfide bond formation in some periplasmic proteins. Acts by oxidizing the DsbA protein. The chain is Disulfide bond formation protein B from Psychrobacter cryohalolentis (strain ATCC BAA-1226 / DSM 17306 / VKM B-2378 / K5).